The primary structure comprises 488 residues: Probable glycine dehydrogenase (decarboxylating) subunit 2 (488 aa).

Residue K274 is modified to N6-(pyridoxal phosphate)lysine.

This sequence belongs to the GcvP family. C-terminal subunit subfamily. The glycine cleavage system is composed of four proteins: P, T, L and H. In this organism, the P 'protein' is a heterodimer of two subunits. It depends on pyridoxal 5'-phosphate as a cofactor.

The catalysed reaction is N(6)-[(R)-lipoyl]-L-lysyl-[glycine-cleavage complex H protein] + glycine + H(+) = N(6)-[(R)-S(8)-aminomethyldihydrolipoyl]-L-lysyl-[glycine-cleavage complex H protein] + CO2. In terms of biological role, the glycine cleavage system catalyzes the degradation of glycine. The P protein binds the alpha-amino group of glycine through its pyridoxal phosphate cofactor; CO(2) is released and the remaining methylamine moiety is then transferred to the lipoamide cofactor of the H protein. The polypeptide is Probable glycine dehydrogenase (decarboxylating) subunit 2 (Listeria monocytogenes serotype 4b (strain F2365)).